Consider the following 260-residue polypeptide: Small ribosomal subunit protein uS2 (260 aa).

Positions 240–260 (VLKPKLPYQPNRRPYQETVKK) are disordered.

It belongs to the universal ribosomal protein uS2 family.

The protein is Small ribosomal subunit protein uS2 of Phytoplasma australiense.